The primary structure comprises 525 residues: GMP synthase [glutamine-hydrolyzing] (525 aa).

Residues 9-207 (RILILDFGSQ…VLDICQCEKL (199 aa)) enclose the Glutamine amidotransferase type-1 domain. Catalysis depends on cysteine 86, which acts as the Nucleophile. Active-site residues include histidine 181 and glutamate 183. In terms of domain architecture, GMPS ATP-PPase spans 208–400 (WTPDAIIEDA…LGLPYDMLYR (193 aa)). 235–241 (SGGVDSS) contributes to the ATP binding site.

As to quaternary structure, homodimer.

It carries out the reaction XMP + L-glutamine + ATP + H2O = GMP + L-glutamate + AMP + diphosphate + 2 H(+). It functions in the pathway purine metabolism; GMP biosynthesis; GMP from XMP (L-Gln route): step 1/1. Its function is as follows. Catalyzes the synthesis of GMP from XMP. This Pseudoalteromonas atlantica (strain T6c / ATCC BAA-1087) protein is GMP synthase [glutamine-hydrolyzing].